The chain runs to 350 residues: Phenylalanine--tRNA ligase alpha subunit (350 aa).

Glu-271 is a binding site for Mg(2+).

The protein belongs to the class-II aminoacyl-tRNA synthetase family. Phe-tRNA synthetase alpha subunit type 1 subfamily. Tetramer of two alpha and two beta subunits. Mg(2+) is required as a cofactor.

Its subcellular location is the cytoplasm. It catalyses the reaction tRNA(Phe) + L-phenylalanine + ATP = L-phenylalanyl-tRNA(Phe) + AMP + diphosphate + H(+). This chain is Phenylalanine--tRNA ligase alpha subunit, found in Verminephrobacter eiseniae (strain EF01-2).